The chain runs to 42 residues: Large ribosomal subunit protein eL32 (42 aa).

The protein belongs to the eukaryotic ribosomal protein eL32 family.

The protein is Large ribosomal subunit protein eL32 (RPL32) of Zea mays (Maize).